We begin with the raw amino-acid sequence, 201 residues long: Pyridoxal 5'-phosphate synthase subunit PdxT (201 aa).

50-52 provides a ligand contact to L-glutamine; that stretch reads GES. Residue Cys82 is the Nucleophile of the active site. L-glutamine contacts are provided by residues Arg115 and 143 to 144; that span reads IR. Residues His179 and Glu181 each act as charge relay system in the active site.

This sequence belongs to the glutaminase PdxT/SNO family. In the presence of PdxS, forms a dodecamer of heterodimers. Only shows activity in the heterodimer.

The catalysed reaction is aldehydo-D-ribose 5-phosphate + D-glyceraldehyde 3-phosphate + L-glutamine = pyridoxal 5'-phosphate + L-glutamate + phosphate + 3 H2O + H(+). It carries out the reaction L-glutamine + H2O = L-glutamate + NH4(+). It functions in the pathway cofactor biosynthesis; pyridoxal 5'-phosphate biosynthesis. Catalyzes the hydrolysis of glutamine to glutamate and ammonia as part of the biosynthesis of pyridoxal 5'-phosphate. The resulting ammonia molecule is channeled to the active site of PdxS. This Deinococcus geothermalis (strain DSM 11300 / CIP 105573 / AG-3a) protein is Pyridoxal 5'-phosphate synthase subunit PdxT.